Here is a 175-residue protein sequence, read N- to C-terminus: Calcineurin subunit B (175 aa).

4 EF-hand domains span residues 21–56, 60–88, 90–125, and 131–166; these read PELM…ANNP, RMIA…FSSK, GRDE…MVGN, and QLQQ…TDIV. Residues D34, D36, S38, S40, E45, D66, D68, S70, T72, E77, D103, D105, D107, Y109, E114, D144, D146, D148, K150, and E155 each coordinate Ca(2+).

This sequence belongs to the calcineurin regulatory subunit family. Composed of a catalytic subunit (A) and a regulatory subunit (B).

Its function is as follows. Regulatory subunit of calcineurin, a calcium-dependent, calmodulin stimulated protein phosphatase. Confers calcium sensitivity. Plays a central role in virulence and antifungal drug action. The sequence is that of Calcineurin subunit B (CNB1) from Cryptococcus neoformans var. neoformans serotype D (strain B-3501A) (Filobasidiella neoformans).